The chain runs to 110 residues: Large ribosomal subunit protein uL22 (110 aa).

This sequence belongs to the universal ribosomal protein uL22 family. Part of the 50S ribosomal subunit.

Functionally, this protein binds specifically to 23S rRNA; its binding is stimulated by other ribosomal proteins, e.g. L4, L17, and L20. It is important during the early stages of 50S assembly. It makes multiple contacts with different domains of the 23S rRNA in the assembled 50S subunit and ribosome. The globular domain of the protein is located near the polypeptide exit tunnel on the outside of the subunit, while an extended beta-hairpin is found that lines the wall of the exit tunnel in the center of the 70S ribosome. This is Large ribosomal subunit protein uL22 from Acinetobacter baylyi (strain ATCC 33305 / BD413 / ADP1).